We begin with the raw amino-acid sequence, 197 residues long: MKLATITFFLLTEIFFYISYAEATRSGPDLCPTIISKRDWGGNAALRVGYTSKPLERVVIHHTVTPECANEARCSSRMVSMQNYHMDELGYDDISYNFVIGGDGRVYEGVGWHKKGSHSPGWDSQSIGIAFIGDFTNKLPSREMLDAAKDLIVCAIELGELTRGYKLLGARNVKATKSPGDKLYREIQNWEGFTRRP.

An N-terminal signal peptide occupies residues 1–23 (MKLATITFFLLTEIFFYISYAEA). Disulfide bonds link Cys31–Cys154 and Cys68–Cys74. The N-acetylmuramoyl-L-alanine amidase domain occupies 53-180 (KPLERVVIHH…RNVKATKSPG (128 aa)).

The protein belongs to the N-acetylmuramoyl-L-alanine amidase 2 family. Localizes to plasma (at protein level).

It is found in the secreted. Functionally, peptidoglycan-recognition protein probably involved in innate immunity by binding to peptidoglycans (PGN) of bacteria and activating the prophenoloxidase (proPO) cascade immune response. Binds to 1,3-beta-D-glucan and PGN. This chain is Peptidoglycan-recognition protein 1 (PGRP-1), found in Holotrichia diomphalia (Korean black chafer).